A 359-amino-acid chain; its full sequence is 3-dehydroquinate synthase (359 aa).

NAD(+)-binding positions include 71 to 76, 105 to 109, 129 to 130, lysine 142, lysine 151, and 169 to 172; these read DGEAHK, GVIGD, TT, and TLHT. Positions 184, 247, and 264 each coordinate Zn(2+).

The protein belongs to the sugar phosphate cyclases superfamily. Dehydroquinate synthase family. Requires NAD(+) as cofactor. Co(2+) serves as cofactor. The cofactor is Zn(2+).

Its subcellular location is the cytoplasm. The enzyme catalyses 7-phospho-2-dehydro-3-deoxy-D-arabino-heptonate = 3-dehydroquinate + phosphate. The protein operates within metabolic intermediate biosynthesis; chorismate biosynthesis; chorismate from D-erythrose 4-phosphate and phosphoenolpyruvate: step 2/7. In terms of biological role, catalyzes the conversion of 3-deoxy-D-arabino-heptulosonate 7-phosphate (DAHP) to dehydroquinate (DHQ). This chain is 3-dehydroquinate synthase, found in Neisseria meningitidis serogroup A / serotype 4A (strain DSM 15465 / Z2491).